We begin with the raw amino-acid sequence, 100 residues long: Integration host factor subunit alpha (100 aa).

Belongs to the bacterial histone-like protein family. Heterodimer of an alpha and a beta chain.

Functionally, this protein is one of the two subunits of integration host factor, a specific DNA-binding protein that functions in genetic recombination as well as in transcriptional and translational control. The sequence is that of Integration host factor subunit alpha from Phenylobacterium zucineum (strain HLK1).